We begin with the raw amino-acid sequence, 339 residues long: Ribonucleoside-diphosphate reductase subunit beta (339 aa).

Fe cation is bound by residues Asp87 and His121. Tyr125 is a catalytic residue. Fe cation is bound at residue His215.

Belongs to the ribonucleoside diphosphate reductase small chain family. As to quaternary structure, tetramer of two alpha and two beta subunits. The cofactor is Fe cation.

It carries out the reaction a 2'-deoxyribonucleoside 5'-diphosphate + [thioredoxin]-disulfide + H2O = a ribonucleoside 5'-diphosphate + [thioredoxin]-dithiol. Provides the precursors necessary for DNA synthesis. Catalyzes the biosynthesis of deoxyribonucleotides from the corresponding ribonucleotides. In Mycoplasmoides gallisepticum (strain R(low / passage 15 / clone 2)) (Mycoplasma gallisepticum), this protein is Ribonucleoside-diphosphate reductase subunit beta (nrdF).